The sequence spans 248 residues: DNA repair protein RecO (248 aa).

The protein belongs to the RecO family.

Its function is as follows. Involved in DNA repair and RecF pathway recombination. The sequence is that of DNA repair protein RecO from Bartonella tribocorum (strain CIP 105476 / IBS 506).